A 449-amino-acid chain; its full sequence is NADH-quinone oxidoreductase subunit D (449 aa).

The protein belongs to the complex I 49 kDa subunit family. In terms of assembly, NDH-1 is composed of 14 different subunits. Subunits NuoB, C, D, E, F, and G constitute the peripheral sector of the complex.

It localises to the cell membrane. The catalysed reaction is a quinone + NADH + 5 H(+)(in) = a quinol + NAD(+) + 4 H(+)(out). Its function is as follows. NDH-1 shuttles electrons from NADH, via FMN and iron-sulfur (Fe-S) centers, to quinones in the respiratory chain. The immediate electron acceptor for the enzyme in this species is believed to be a menaquinone. Couples the redox reaction to proton translocation (for every two electrons transferred, four hydrogen ions are translocated across the cytoplasmic membrane), and thus conserves the redox energy in a proton gradient. The chain is NADH-quinone oxidoreductase subunit D from Saccharopolyspora erythraea (strain ATCC 11635 / DSM 40517 / JCM 4748 / NBRC 13426 / NCIMB 8594 / NRRL 2338).